The sequence spans 320 residues: Methionyl-tRNA formyltransferase (320 aa).

(6S)-5,6,7,8-tetrahydrofolate is bound at residue 112-115 (SILP).

Belongs to the Fmt family.

The enzyme catalyses L-methionyl-tRNA(fMet) + (6R)-10-formyltetrahydrofolate = N-formyl-L-methionyl-tRNA(fMet) + (6S)-5,6,7,8-tetrahydrofolate + H(+). Its function is as follows. Attaches a formyl group to the free amino group of methionyl-tRNA(fMet). The formyl group appears to play a dual role in the initiator identity of N-formylmethionyl-tRNA by promoting its recognition by IF2 and preventing the misappropriation of this tRNA by the elongation apparatus. This chain is Methionyl-tRNA formyltransferase, found in Shewanella woodyi (strain ATCC 51908 / MS32).